The following is a 271-amino-acid chain: 3-methyl-2-oxobutanoate hydroxymethyltransferase 1 (271 aa).

Aspartate 53 and aspartate 92 together coordinate Mg(2+). 3-methyl-2-oxobutanoate contacts are provided by residues 53–54 (DS), aspartate 92, and lysine 120. Position 122 (glutamate 122) interacts with Mg(2+). The active-site Proton acceptor is glutamate 189.

Belongs to the PanB family. Homodecamer; pentamer of dimers. Requires Mg(2+) as cofactor.

The protein resides in the cytoplasm. The catalysed reaction is 3-methyl-2-oxobutanoate + (6R)-5,10-methylene-5,6,7,8-tetrahydrofolate + H2O = 2-dehydropantoate + (6S)-5,6,7,8-tetrahydrofolate. Its pathway is cofactor biosynthesis; (R)-pantothenate biosynthesis; (R)-pantoate from 3-methyl-2-oxobutanoate: step 1/2. Its function is as follows. Catalyzes the reversible reaction in which hydroxymethyl group from 5,10-methylenetetrahydrofolate is transferred onto alpha-ketoisovalerate to form ketopantoate. The chain is 3-methyl-2-oxobutanoate hydroxymethyltransferase 1 from Burkholderia ambifaria (strain ATCC BAA-244 / DSM 16087 / CCUG 44356 / LMG 19182 / AMMD) (Burkholderia cepacia (strain AMMD)).